A 434-amino-acid chain; its full sequence is FAD-dependent monooxygenase cfoG (434 aa).

Residues 1-22 form the signal peptide; sequence MKSSPGLHIIIVGAGITGLATA. Glu36 provides a ligand contact to FAD. Catalysis depends on residues Arg193 and Tyr233. FAD is bound by residues Asp314 and Gly327.

It belongs to the paxM FAD-dependent monooxygenase family. As to quaternary structure, monomer. Requires FAD as cofactor.

The protein operates within secondary metabolite biosynthesis; flavonoid biosynthesis. In terms of biological role, monooxygenase; part of the gene cluster that mediates the biosynthesis of chlorflavonin, a fungal flavonoid with acetolactate synthase inhibitory activity. Within the pathway, cfoG is responsible for the hydroxylation of the flavonoid skeleton at position C8. The pathway begins with the PKS-NRPS hybrid synthetase cfoA that uses benzoic acid or p-hydroxybenzoic acid as a starter unit with four rounds of chain elongation using malonyl-CoA to form the chalcone skeleton. Then, a new type of chalcone isomerase, cfoK, catalyzes the conversion of the chalcone into a flavanone by a histidine-mediated oxa-Michael addition mechanism. The desaturation of flavanone to flavone is catalyzed by a new type of flavone synthase, the flavin mononucleotide (FMN)-dependent oxidoreductase cfoJ. Monooxygenases cfoF, cfoG, and P450 cfoH are responsible for the hydroxylation of the flavonoid skeleton at sites C3, C8, and C2', respectively. Like cfoF, the dehydratase cfoI plays also a role in the hydroxylation of position C3. Methyltransferases cfoB, cfoC, and cfoD then catalyze the methylation of C7-OH, C8-OH, and C3-OH, respectively. Finally, the monooxygenase cfoE is responsible for the chlorination of flavonoid at position C3'. The sequence is that of FAD-dependent monooxygenase cfoG from Aspergillus candidus.